The following is a 545-amino-acid chain: Membrane protein insertase YidC (545 aa).

The next 6 helical transmembrane spans lie at 10–30 (AIYLSLFFIGIFMIIDDIFFS), 319–339 (LLYFIQVPMQLIMQIFYNVIP), 341–361 (WGLSIMFLTIVVRILIFPLTF), 407–427 (LGGCFPILLQLPVFFALYGLV), 467–487 (ILPFIMMVTQLISTIISSNVS), and 502–522 (MPIMFFFILYDMPSGLLIYWI).

Belongs to the OXA1/ALB3/YidC family. Type 1 subfamily. Interacts with the Sec translocase complex via SecD. Specifically interacts with transmembrane segments of nascent integral membrane proteins during membrane integration.

It is found in the cell inner membrane. Functionally, required for the insertion and/or proper folding and/or complex formation of integral membrane proteins into the membrane. Involved in integration of membrane proteins that insert both dependently and independently of the Sec translocase complex, as well as at least some lipoproteins. Aids folding of multispanning membrane proteins. This is Membrane protein insertase YidC from Borrelia hermsii (strain HS1 / DAH).